Here is a 266-residue protein sequence, read N- to C-terminus: Interleukin-1 beta (266 aa).

Residues Met-1–Asp-113 constitute a propeptide that is removed on maturation.

This sequence belongs to the IL-1 family. Monomer. In its precursor form, weakly interacts with full-length MEFV; the mature cytokine does not interact at all. Interacts with integrins ITGAV:ITGBV and ITGA5:ITGB1; integrin-binding is required for IL1B signaling. Interacts with cargo receptor TMED10; the interaction is direct and is required for the secretion of IL1B mature form. Interacts with HSP90AB1; the interaction facilitates cargo translocation into the ERGIC. Interacts with HSP90B1; the interaction facilitates cargo translocation into the ERGIC.

The protein resides in the cytoplasm. Its subcellular location is the cytosol. It localises to the secreted. It is found in the lysosome. The protein localises to the extracellular exosome. Potent pro-inflammatory cytokine. Initially discovered as the major endogenous pyrogen, induces prostaglandin synthesis, neutrophil influx and activation, T-cell activation and cytokine production, B-cell activation and antibody production, and fibroblast proliferation and collagen production. Promotes Th17 differentiation of T-cells. Synergizes with IL12/interleukin-12 to induce IFNG synthesis from T-helper 1 (Th1) cells. Plays a role in angiogenesis by inducing VEGF production synergistically with TNF and IL6. Involved in transduction of inflammation downstream of pyroptosis: its mature form is specifically released in the extracellular milieu by passing through the gasdermin-D (GSDMD) pore. The chain is Interleukin-1 beta (IL1B) from Cervus elaphus (Red deer).